We begin with the raw amino-acid sequence, 212 residues long: Protein ERP5 (212 aa).

A signal peptide spans 1–20 (MKYNIVHGICLLFAITQAVG). Residues 21-178 (AVHFYAKSGE…FRNQSESANS (158 aa)) are Lumenal-facing. In terms of domain architecture, GOLD spans 31–124 (TKCFYEHLSR…TLRVFIELEI (94 aa)). An N-linked (GlcNAc...) asparagine glycan is attached at Asn171. The helical transmembrane segment at 179-199 (KIMTWSVFQLLILLGTCAFQL) threads the bilayer. At 200-212 (RYLKNFFVKQKVV) the chain is on the cytoplasmic side.

The protein belongs to the EMP24/GP25L family.

Its subcellular location is the endoplasmic reticulum membrane. Functionally, involved in vesicular protein trafficking. The protein is Protein ERP5 (ERP5) of Saccharomyces cerevisiae (strain ATCC 204508 / S288c) (Baker's yeast).